Here is a 373-residue protein sequence, read N- to C-terminus: Peroxisomal biogenesis factor 3 (373 aa).

Residues 1-15 (MFRSTWNFLKRHKKK) lie on the Cytoplasmic side of the membrane. The interval 1-45 (MFRSTWNFLKRHKKKCIFLGTVLGGVYILGKYGQKKIREIQEREA) is targeting to peroxisomes. Residues 16-36 (CIFLGTVLGGVYILGKYGQKK) traverse the membrane as a helical segment. The Peroxisomal portion of the chain corresponds to 37 to 116 (IREIQEREAA…LKIISFTRSI (80 aa)). A helical membrane pass occupies residues 117-140 (VAVYSTCMLVVLLRVQLNIIGGYI). Residues 120–136 (YSTCMLVVLLRVQLNII) are interaction with PEX19. At 141-373 (YLDNAAVGKN…AFSTPQQLEK (233 aa)) the chain is on the cytoplasmic side.

This sequence belongs to the peroxin-3 family. In terms of assembly, interacts with PEX19.

It localises to the peroxisome membrane. Involved in peroxisome biosynthesis and integrity. Assembles membrane vesicles before the matrix proteins are translocated. As a docking factor for PEX19, is necessary for the import of peroxisomal membrane proteins in the peroxisomes. This chain is Peroxisomal biogenesis factor 3 (PEX3), found in Bos taurus (Bovine).